Reading from the N-terminus, the 415-residue chain is Gamma-glutamyl phosphate reductase (415 aa).

Belongs to the gamma-glutamyl phosphate reductase family.

It localises to the cytoplasm. The enzyme catalyses L-glutamate 5-semialdehyde + phosphate + NADP(+) = L-glutamyl 5-phosphate + NADPH + H(+). Its pathway is amino-acid biosynthesis; L-proline biosynthesis; L-glutamate 5-semialdehyde from L-glutamate: step 2/2. Functionally, catalyzes the NADPH-dependent reduction of L-glutamate 5-phosphate into L-glutamate 5-semialdehyde and phosphate. The product spontaneously undergoes cyclization to form 1-pyrroline-5-carboxylate. In Bacillus cereus (strain 03BB102), this protein is Gamma-glutamyl phosphate reductase.